Reading from the N-terminus, the 392-residue chain is Putative RNA-binding protein Luc7-like 2 (392 aa).

At Ser18 the chain carries Phosphoserine. Residues 102 to 177 are a coiled coil; the sequence is EVSKKRLAET…EAEEVYRNSM (76 aa). The segment covering 235–257 has biased composition (basic and acidic residues); sequence KQEKRNQERLKRREEREREEREK. Residues 235-392 are disordered; it reads KQEKRNQERL…SSEEREAGEI (158 aa). Basic residues predominate over residues 258-321; that stretch reads LRRSRSHSKN…RSRSHQRSRH (64 aa). A 5-hydroxylysine; by JMJD6 mark is found at Lys266 and Lys269. Basic and acidic residues-rich tracts occupy residues 337-364 and 377-392; these read KERF…DRDR and RSED…AGEI.

It belongs to the Luc7 family. Interacts with SCNM1. All isoforms are expressed in brain, kidney, heart, thymus, stomach, skeletal muscle, testis and spinal cord.

The protein localises to the nucleus speckle. The protein resides in the nucleus. It is found in the nucleoplasm. In terms of biological role, may bind to RNA via its Arg/Ser-rich domain. This chain is Putative RNA-binding protein Luc7-like 2 (Luc7l2), found in Mus musculus (Mouse).